The sequence spans 154 residues: uncharacterized protein (154 aa).

Residues His-47, His-127, and His-131 each contribute to the a divalent metal cation site. Residue Tyr-150 is modified to Phosphotyrosine.

It belongs to the DinB family. In terms of assembly, homodimer.

This is an uncharacterized protein from Bacillus subtilis (strain 168).